The sequence spans 438 residues: Indole diterpene prenyltransferase janD (438 aa).

L-tryptophan is bound at residue 80 to 81 (FM). Arginine 102, lysine 190, arginine 264, lysine 266, tyrosine 268, tyrosine 350, tyrosine 414, and tyrosine 418 together coordinate substrate.

It belongs to the tryptophan dimethylallyltransferase family.

The protein operates within secondary metabolite biosynthesis. Functionally, indole diterpene prenyltransferase; part of the gene cluster that mediates the biosynthesis of the indole diterpenes janthitremanes such as shearinine K or shearinine A. The geranylgeranyl diphosphate (GGPP) synthase janG catalyzes the first step in janthitremane biosynthesis via conversion of farnesyl pyrophosphate and isopentyl pyrophosphate into geranylgeranyl pyrophosphate (GGPP). Condensation of indole-3-glycerol phosphate with GGPP by the prenyl transferase janC then forms 3-geranylgeranylindole (3-GGI). Epoxidation by the FAD-dependent monooxygenase janM leads to a epoxidized-GGI that is substrate of the terpene cyclase janB for cyclization to yield paspaline. Paspaline is subsequently converted to 13-desoxypaspaline by the cytochrome P450 monooxygenase janP, via beta-PC-M6 in a series of alpha-face oxidations. The cytochrome P450 monooxygenase janQ is proposed to carry out sequential beta-face oxidation steps at C-7 and C-13 of 13-desoxypaspaline to form paspalicine and paspalinine respectively. The indole diterpene prenyltransferase janD may then convert paspalinine into shearinine K which is substrate of janO and/or additional enzymes for oxidation and cyclization to generate shearinine A. The polypeptide is Indole diterpene prenyltransferase janD (Penicillium janthinellum (Penicillium vitale)).